Consider the following 402-residue polypeptide: Nicotinate phosphoribosyltransferase (402 aa).

At H224 the chain carries Phosphohistidine; by autocatalysis.

It belongs to the NAPRTase family. Post-translationally, transiently phosphorylated on a His residue during the reaction cycle. Phosphorylation strongly increases the affinity for substrates and increases the rate of nicotinate D-ribonucleotide production. Dephosphorylation regenerates the low-affinity form of the enzyme, leading to product release.

The enzyme catalyses nicotinate + 5-phospho-alpha-D-ribose 1-diphosphate + ATP + H2O = nicotinate beta-D-ribonucleotide + ADP + phosphate + diphosphate. It functions in the pathway cofactor biosynthesis; NAD(+) biosynthesis; nicotinate D-ribonucleotide from nicotinate: step 1/1. In terms of biological role, catalyzes the synthesis of beta-nicotinate D-ribonucleotide from nicotinate and 5-phospho-D-ribose 1-phosphate at the expense of ATP. This is Nicotinate phosphoribosyltransferase from Neisseria meningitidis serogroup A / serotype 4A (strain DSM 15465 / Z2491).